The primary structure comprises 197 residues: Imidazoleglycerol-phosphate dehydratase (197 aa).

It belongs to the imidazoleglycerol-phosphate dehydratase family.

The protein resides in the cytoplasm. The enzyme catalyses D-erythro-1-(imidazol-4-yl)glycerol 3-phosphate = 3-(imidazol-4-yl)-2-oxopropyl phosphate + H2O. It functions in the pathway amino-acid biosynthesis; L-histidine biosynthesis; L-histidine from 5-phospho-alpha-D-ribose 1-diphosphate: step 6/9. This chain is Imidazoleglycerol-phosphate dehydratase, found in Teredinibacter turnerae (strain ATCC 39867 / T7901).